A 283-amino-acid polypeptide reads, in one-letter code: Protoheme IX farnesyltransferase (283 aa).

Transmembrane regions (helical) follow at residues 6-26 (LLLTKPGIILGNLVTVMAGFL), 35-55 (FGLFFSTILGLAFIMASGCVF), 85-105 (AIVFGLALAIVGAIILYFYTN), 106-126 (LLTLVIAELGFIIYVFFYSIW), 131-151 (VYGTAIGSLAGAVPPLVGYCA), 160-180 (AFILFAMMVFWQMPHFFSIAI), 207-227 (ILLYIIIFTLTSSLLTFFHFT), 230-250 (LYLILTIGLGLTWLLMGLRGL), and 262-282 (MFRFSLVIISVLSLTIPFDLV).

Belongs to the UbiA prenyltransferase family. Protoheme IX farnesyltransferase subfamily.

It is found in the cell inner membrane. It catalyses the reaction heme b + (2E,6E)-farnesyl diphosphate + H2O = Fe(II)-heme o + diphosphate. It participates in porphyrin-containing compound metabolism; heme O biosynthesis; heme O from protoheme: step 1/1. Functionally, converts heme B (protoheme IX) to heme O by substitution of the vinyl group on carbon 2 of heme B porphyrin ring with a hydroxyethyl farnesyl side group. This Protochlamydia amoebophila (strain UWE25) protein is Protoheme IX farnesyltransferase.